The following is a 429-amino-acid chain: UDP-N-acetylglucosamine 1-carboxyvinyltransferase (429 aa).

22-23 (KN) lines the phosphoenolpyruvate pocket. A UDP-N-acetyl-alpha-D-glucosamine-binding site is contributed by arginine 102. Cysteine 126 acts as the Proton donor in catalysis. 2-(S-cysteinyl)pyruvic acid O-phosphothioketal is present on cysteine 126. Residues 131-135 (RPVDL), 171-174 (KVSV), aspartate 316, and isoleucine 338 contribute to the UDP-N-acetyl-alpha-D-glucosamine site.

It belongs to the EPSP synthase family. MurA subfamily.

It localises to the cytoplasm. The enzyme catalyses phosphoenolpyruvate + UDP-N-acetyl-alpha-D-glucosamine = UDP-N-acetyl-3-O-(1-carboxyvinyl)-alpha-D-glucosamine + phosphate. It participates in cell wall biogenesis; peptidoglycan biosynthesis. Cell wall formation. Adds enolpyruvyl to UDP-N-acetylglucosamine. This is UDP-N-acetylglucosamine 1-carboxyvinyltransferase from Brucella abortus (strain S19).